Reading from the N-terminus, the 241-residue chain is Isoprenyl transferase (241 aa).

Residue Asp-17 is part of the active site. A Mg(2+)-binding site is contributed by Asp-17. Substrate contacts are provided by residues 18-21, Trp-22, Arg-30, His-34, and 62-64; these read GNGR and STE. Asn-65 serves as the catalytic Proton acceptor. Substrate contacts are provided by residues Trp-66, Arg-68, Arg-186, and 192–194; that span reads RLS. Residue Glu-205 coordinates Mg(2+).

The protein belongs to the UPP synthase family. As to quaternary structure, homodimer. Requires Mg(2+) as cofactor.

In terms of biological role, catalyzes the condensation of isopentenyl diphosphate (IPP) with allylic pyrophosphates generating different type of terpenoids. The chain is Isoprenyl transferase from Leptospira interrogans serogroup Icterohaemorrhagiae serovar copenhageni (strain Fiocruz L1-130).